The following is a 514-amino-acid chain: GTPase-activating protein gyp1 (514 aa).

Disordered stretches follow at residues 17 to 65 (LWNG…QPPK) and 130 to 164 (LPRM…LHSS). Polar residues-rich tracts occupy residues 18-28 (WNGSSSATSDP) and 135-158 (RSTT…TTSR). The Rab-GAP TBC domain occupies 216-443 (GIPSEHRPIV…RMWDTYMAEG (228 aa)).

Its subcellular location is the golgi apparatus. It is found in the golgi stack. It localises to the cytoplasm. The protein localises to the nucleus. In terms of biological role, stimulates specifically the GTPase activity of ypt1. Functions on the Golgi as a negative regulator of ypt1. This Schizosaccharomyces pombe (strain 972 / ATCC 24843) (Fission yeast) protein is GTPase-activating protein gyp1.